Here is a 283-residue protein sequence, read N- to C-terminus: 2-hydroxy-6-oxononadienedioate/2-hydroxy-6-oxononatrienedioate hydrolase (283 aa).

The 235-residue stretch at 35–269 (VVVMFHGSGP…KCGHWAQWEH (235 aa)) folds into the AB hydrolase-1 domain. Histidine 263 functions as the Proton acceptor in the catalytic mechanism.

The protein belongs to the AB hydrolase superfamily. MhpC family. Homodimer.

The catalysed reaction is (2Z,4E)-2-hydroxy-6-oxonona-2,4-dienedioate + H2O = (2Z)-2-hydroxypenta-2,4-dienoate + succinate + H(+). It catalyses the reaction (2Z,4E,7E)-2-hydroxy-6-oxonona-2,4,7-trienedioate + H2O = (2Z)-2-hydroxypenta-2,4-dienoate + fumarate + H(+). Its pathway is aromatic compound metabolism; 3-phenylpropanoate degradation. Functionally, catalyzes the cleavage of the C5-C6 bond of 2-hydroxy-6-oxononadienedioate and 2-hydroxy-6-oxononatrienedioate, a dienol ring fission product of the bacterial meta-cleavage pathway for degradation of phenylpropionic acid. In Pseudomonas sp, this protein is 2-hydroxy-6-oxononadienedioate/2-hydroxy-6-oxononatrienedioate hydrolase.